The following is a 122-amino-acid chain: Ribosome-binding factor A (122 aa).

A compositionally biased stretch (basic and acidic residues) spans 95–111; it reads PTVERVTRIQRTLREVS. The tract at residues 95–122 is disordered; that stretch reads PTVERVTRIQRTLREVSGEDGDGNGTQE.

Belongs to the RbfA family. As to quaternary structure, monomer. Binds 30S ribosomal subunits, but not 50S ribosomal subunits or 70S ribosomes.

It localises to the cytoplasm. One of several proteins that assist in the late maturation steps of the functional core of the 30S ribosomal subunit. Associates with free 30S ribosomal subunits (but not with 30S subunits that are part of 70S ribosomes or polysomes). Required for efficient processing of 16S rRNA. May interact with the 5'-terminal helix region of 16S rRNA. This Rubrobacter xylanophilus (strain DSM 9941 / JCM 11954 / NBRC 16129 / PRD-1) protein is Ribosome-binding factor A.